The sequence spans 666 residues: Zinc finger MYM-type protein 5 (666 aa).

Glycyl lysine isopeptide (Lys-Gly) (interchain with G-Cter in SUMO2) cross-links involve residues Lys85, Lys88, Lys146, and Lys163. Residues Glu87–Gln106 are disordered. The segment at Ser191 to Asp212 is disordered. A compositionally biased stretch (polar residues) spans Ser194–Gln208. Residue Lys222 forms a Glycyl lysine isopeptide (Lys-Gly) (interchain with G-Cter in SUMO2) linkage. MYM-type zinc fingers lie at residues His262–Asp296, Gln308–Val348, His355–Gly390, and Lys401–Asn428. Glycyl lysine isopeptide (Lys-Gly) (interchain with G-Cter in SUMO2) cross-links involve residues Lys440, Lys452, Lys459, and Lys549.

Interacts (via N-terminal 120 amino acid region) with ETV5 (via C-terminal).

It localises to the nucleus. Its function is as follows. Functions as a transcriptional regulator. This chain is Zinc finger MYM-type protein 5 (ZMYM5), found in Macaca fascicularis (Crab-eating macaque).